The following is a 153-amino-acid chain: MPPPVLALVSGQALPAFLLCSTLLVIKMYVVAVITGQVRLRKKAFANPEDALRHGGLQYCRSDQDVDRCLRAHRNDMETIYPFLFLGFVYSFLGPDPFIAQMHFLVFFLGRMVHTVAYLGKLRAPTRSLAYTVAQLPCASMALQIVWEAACHL.

Over 1–13 the chain is Lumenal; sequence MPPPVLALVSGQA. The helical transmembrane segment at 14–42 threads the bilayer; it reads LPAFLLCSTLLVIKMYVVAVITGQVRLRK. Position 39 (Arg39) interacts with glutathione. The Cytoplasmic segment spans residues 43-61; that stretch reads KAFANPEDALRHGGLQYCR. Residues 62-91 traverse the membrane as a helical segment; that stretch reads SDQDVDRCLRAHRNDMETIYPFLFLGFVYS. 74-78 serves as a coordination point for glutathione; the sequence is RNDME. At 92-96 the chain is on the lumenal side; the sequence is FLGPD. A helical transmembrane segment spans residues 97 to 120; sequence PFIAQMHFLVFFLGRMVHTVAYLG. Glutathione contacts are provided by His114 and Tyr118. Residues 121-124 lie on the Cytoplasmic side of the membrane; it reads KLRA. The helical transmembrane segment at 125-153 threads the bilayer; sequence PTRSLAYTVAQLPCASMALQIVWEAACHL. 127–131 contributes to the glutathione binding site; that stretch reads RSLAY.

Belongs to the MAPEG family. As to quaternary structure, homotrimer. The cofactor is glutathione.

The protein localises to the membrane. It is found in the cytoplasm. It localises to the perinuclear region. It carries out the reaction prostaglandin H2 = prostaglandin E2. The catalysed reaction is 2-glyceryl-prostaglandin H2 = 2-glyceryl-prostaglandin E2. It catalyses the reaction prostaglandin G2 = (15S)-15-hydroperoxy-prostaglandin E2. The enzyme catalyses 1-chloro-2,4-dinitrobenzene + glutathione = 2,4-dinitrophenyl-S-glutathione + chloride + H(+). It carries out the reaction (5S)-hydroperoxy-(6E,8Z,11Z,14Z)-eicosatetraenoate + 2 glutathione = (5S)-hydroxy-(6E,8Z,11Z,14Z)-eicosatetraenoate + glutathione disulfide + H2O. It participates in lipid metabolism; prostaglandin biosynthesis. Terminal enzyme of the cyclooxygenase (COX)-2-mediated prostaglandin E2 (PGE2) biosynthetic pathway. Catalyzes the glutathione-dependent oxidoreduction of prostaglandin endoperoxide H2 (PGH2) to prostaglandin E2 (PGE2) in response to inflammatory stimuli. Plays a key role in inflammation response, fever and pain. Also catalyzes the oxidoreduction of endocannabinoids into prostaglandin glycerol esters and PGG2 into 15-hydroperoxy-PGE2. In addition, displays low glutathione transferase and glutathione-dependent peroxidase activities, toward 1-chloro-2,4-dinitrobenzene and 5-hydroperoxyicosatetraenoic acid (5-HPETE), respectively. The chain is Prostaglandin E synthase (PTGES) from Canis lupus familiaris (Dog).